Here is a 347-residue protein sequence, read N- to C-terminus: Elongation factor Ts (347 aa).

The segment at 80 to 83 is involved in Mg(2+) ion dislocation from EF-Tu; it reads TDFV.

The protein belongs to the EF-Ts family.

It is found in the cytoplasm. Associates with the EF-Tu.GDP complex and induces the exchange of GDP to GTP. It remains bound to the aminoacyl-tRNA.EF-Tu.GTP complex up to the GTP hydrolysis stage on the ribosome. The polypeptide is Elongation factor Ts (Streptococcus gordonii (strain Challis / ATCC 35105 / BCRC 15272 / CH1 / DL1 / V288)).